Here is a 515-residue protein sequence, read N- to C-terminus: Phospholipase A1-Igamma1, chloroplastic (515 aa).

The N-terminal 44 residues, 1-44 (MATIPSHNLRPHTTNQRTQYSLSFRPHFSRSTLITFPARSSPAR), are a transit peptide targeting the chloroplast. Residues 301–305 (GHSLG) carry the GXSXG motif. Ser303 serves as the catalytic Acyl-ester intermediate. Residues Asp366 and His422 each act as charge relay system in the active site.

It belongs to the AB hydrolase superfamily. Lipase family. In terms of tissue distribution, ubiquitous. Highly expressed in leaves.

It localises to the plastid. Its subcellular location is the chloroplast. The catalysed reaction is 1,2-dihexadecanoyl-sn-glycero-3-phosphocholine + H2O = 2-hexadecanoyl-sn-glycero-3-phosphocholine + hexadecanoate + H(+). It catalyses the reaction a 1,2-diacyl-3-O-(beta-D-galactosyl)-sn-glycerol + H2O = an acyl-3-O-(beta-D-galactosyl)-sn-glycerol + a fatty acid + H(+). It carries out the reaction a 1,2-diacyl-3-O-[alpha-D-galactosyl-(1-&gt;6)-beta-D-galactosyl]-sn-glycerol + H2O = acyl-3-O-[alpha-D-galactosyl-(1-&gt;6)-beta-D-galactosyl]-sn-glycerol + a fatty acid + H(+). Its function is as follows. Acylhydrolase with a broad specificity. Catalyzes the hydrolysis of phosphatidylcholine at the sn-1 position. Moderate activity toward phosphatidylcholine (PC), monogalactosyldiacylglycerol (MGDG), digalactosyldiacylglycerol (DGDG) and triacylglycerol (TAG). May display dual sn-1/sn-2 substrate specificity. Could be involved in early wound response. This is Phospholipase A1-Igamma1, chloroplastic from Arabidopsis thaliana (Mouse-ear cress).